A 395-amino-acid chain; its full sequence is S-adenosylmethionine synthase (395 aa).

His-15 contributes to the ATP binding site. Mg(2+) is bound at residue Asp-17. A K(+)-binding site is contributed by Glu-43. Glu-56 and Gln-99 together coordinate L-methionine. Positions Gln-99–Glu-109 are flexible loop. ATP is bound by residues Asp-174–Lys-176, Arg-240–Phe-241, Asp-249, Arg-255–Lys-256, Ala-272, and Lys-276. Asp-249 lines the L-methionine pocket. Lys-280 serves as a coordination point for L-methionine.

This sequence belongs to the AdoMet synthase family. As to quaternary structure, homotetramer; dimer of dimers. The cofactor is Mg(2+). K(+) serves as cofactor.

It is found in the cytoplasm. The catalysed reaction is L-methionine + ATP + H2O = S-adenosyl-L-methionine + phosphate + diphosphate. Its pathway is amino-acid biosynthesis; S-adenosyl-L-methionine biosynthesis; S-adenosyl-L-methionine from L-methionine: step 1/1. Functionally, catalyzes the formation of S-adenosylmethionine (AdoMet) from methionine and ATP. The overall synthetic reaction is composed of two sequential steps, AdoMet formation and the subsequent tripolyphosphate hydrolysis which occurs prior to release of AdoMet from the enzyme. This Alkaliphilus oremlandii (strain OhILAs) (Clostridium oremlandii (strain OhILAs)) protein is S-adenosylmethionine synthase.